The following is a 61-amino-acid chain: Small ribosomal subunit protein uS14 (61 aa).

Residues Cys-24, Cys-27, Cys-40, and Cys-43 each contribute to the Zn(2+) site.

Belongs to the universal ribosomal protein uS14 family. Zinc-binding uS14 subfamily. In terms of assembly, part of the 30S ribosomal subunit. Contacts proteins S3 and S10. The cofactor is Zn(2+).

Functionally, binds 16S rRNA, required for the assembly of 30S particles and may also be responsible for determining the conformation of the 16S rRNA at the A site. The polypeptide is Small ribosomal subunit protein uS14 (Alkaliphilus metalliredigens (strain QYMF)).